Here is a 456-residue protein sequence, read N- to C-terminus: MADNPVYLSVSDLNFYISQKFKNDPYLHKVFLQGELSNFRFRMHSHQYFSLKDDKSKINVVMFRSFFEKLKFKPEEGMKVYVSGYVDVYGPQGSYQFYAQTMEPAGLGALYEQLRQLQEKLAKEGLFNEDHKKRLPLFPDRIAVVTSASGAVIHDIMVTANRRFPHAEIDLYPAKVQGDEAADTIVASLKQIQAQGDKYDVVIIGRGGGSLEDLWPFNEEKVVRQIYAMQMPVISSVGHETDTTLADLVADARAATPTAAAEYATPNLADVLTKIVQLRARLYAAMQANIRAKRQILDRLRKAPVLQEPTRIYDQQIQQVDMLSHRLNQAISNQLQHDRSSVRLLQERLKALNPGRRLEQLERERTFIVANLFSTMTAYLKDQRNKLNRTMQQLDDISPLKTIGRGYVYTTDQEGNTVTSVDKLEIDEKLKLHFKDGQVQVNVENIRREKDGNQEK.

The protein belongs to the XseA family. In terms of assembly, heterooligomer composed of large and small subunits.

Its subcellular location is the cytoplasm. It carries out the reaction Exonucleolytic cleavage in either 5'- to 3'- or 3'- to 5'-direction to yield nucleoside 5'-phosphates.. Bidirectionally degrades single-stranded DNA into large acid-insoluble oligonucleotides, which are then degraded further into small acid-soluble oligonucleotides. The protein is Exodeoxyribonuclease 7 large subunit of Lactobacillus gasseri (strain ATCC 33323 / DSM 20243 / BCRC 14619 / CIP 102991 / JCM 1131 / KCTC 3163 / NCIMB 11718 / NCTC 13722 / AM63).